A 134-amino-acid chain; its full sequence is Small ribosomal subunit protein uS8 (134 aa).

It belongs to the universal ribosomal protein uS8 family. As to quaternary structure, part of the 30S ribosomal subunit. Contacts proteins S5 and S12.

In terms of biological role, one of the primary rRNA binding proteins, it binds directly to 16S rRNA central domain where it helps coordinate assembly of the platform of the 30S subunit. The chain is Small ribosomal subunit protein uS8 from Kosmotoga olearia (strain ATCC BAA-1733 / DSM 21960 / TBF 19.5.1).